A 310-amino-acid polypeptide reads, in one-letter code: tRNA uridine(34) hydroxylase (310 aa).

The Rhodanese domain maps to 127-225 (KNQNTIVIDT…YLDEISKEEN (99 aa)). Catalysis depends on cysteine 185, which acts as the Cysteine persulfide intermediate.

This sequence belongs to the TrhO family.

It catalyses the reaction uridine(34) in tRNA + AH2 + O2 = 5-hydroxyuridine(34) in tRNA + A + H2O. Functionally, catalyzes oxygen-dependent 5-hydroxyuridine (ho5U) modification at position 34 in tRNAs. The sequence is that of tRNA uridine(34) hydroxylase from Prochlorococcus marinus (strain MIT 9215).